A 404-amino-acid polypeptide reads, in one-letter code: 4-hydroxy-3-methylbut-2-enyl diphosphate reductase (404 aa).

Residue Cys66 participates in [4Fe-4S] cluster binding. His96 provides a ligand contact to (2E)-4-hydroxy-3-methylbut-2-enyl diphosphate. A dimethylallyl diphosphate-binding site is contributed by His96. His96 lines the isopentenyl diphosphate pocket. Cys157 provides a ligand contact to [4Fe-4S] cluster. Residue His185 participates in (2E)-4-hydroxy-3-methylbut-2-enyl diphosphate binding. His185 lines the dimethylallyl diphosphate pocket. His185 provides a ligand contact to isopentenyl diphosphate. Glu187 (proton donor) is an active-site residue. Thr250 serves as a coordination point for (2E)-4-hydroxy-3-methylbut-2-enyl diphosphate. Cys288 lines the [4Fe-4S] cluster pocket. Ser317, Ser318, Asn319, and Ser380 together coordinate (2E)-4-hydroxy-3-methylbut-2-enyl diphosphate. Positions 317, 318, 319, and 380 each coordinate dimethylallyl diphosphate. Ser317, Ser318, Asn319, and Ser380 together coordinate isopentenyl diphosphate.

The protein belongs to the IspH family. Requires [4Fe-4S] cluster as cofactor.

It carries out the reaction isopentenyl diphosphate + 2 oxidized [2Fe-2S]-[ferredoxin] + H2O = (2E)-4-hydroxy-3-methylbut-2-enyl diphosphate + 2 reduced [2Fe-2S]-[ferredoxin] + 2 H(+). The catalysed reaction is dimethylallyl diphosphate + 2 oxidized [2Fe-2S]-[ferredoxin] + H2O = (2E)-4-hydroxy-3-methylbut-2-enyl diphosphate + 2 reduced [2Fe-2S]-[ferredoxin] + 2 H(+). Its pathway is isoprenoid biosynthesis; dimethylallyl diphosphate biosynthesis; dimethylallyl diphosphate from (2E)-4-hydroxy-3-methylbutenyl diphosphate: step 1/1. It participates in isoprenoid biosynthesis; isopentenyl diphosphate biosynthesis via DXP pathway; isopentenyl diphosphate from 1-deoxy-D-xylulose 5-phosphate: step 6/6. Catalyzes the conversion of 1-hydroxy-2-methyl-2-(E)-butenyl 4-diphosphate (HMBPP) into a mixture of isopentenyl diphosphate (IPP) and dimethylallyl diphosphate (DMAPP). Acts in the terminal step of the DOXP/MEP pathway for isoprenoid precursor biosynthesis. This Prochlorococcus marinus (strain MIT 9211) protein is 4-hydroxy-3-methylbut-2-enyl diphosphate reductase.